The sequence spans 242 residues: Platelet-derived growth factor subunit B (242 aa).

A signal peptide spans 1–20; it reads MNRCWALFLSLCCYLRLVSA. A propeptide spans 21–81 (removed in mature form); that stretch reads EGDPIPEELY…ELESLSRGRR (61 aa). Residue Asn-63 is glycosylated (N-linked (GlcNAc...) asparagine). Disulfide bonds link Cys-97-Cys-141, Cys-130-Cys-178, and Cys-134-Cys-180. Positions 219–232 are enriched in basic residues; it reads PPKGKHRKFKHTHD. Positions 219–242 are disordered; the sequence is PPKGKHRKFKHTHDKKALKETLGA. Over residues 233–242 the composition is skewed to basic and acidic residues; it reads KKALKETLGA.

It belongs to the PDGF/VEGF growth factor family. In terms of assembly, antiparallel homodimer; disulfide-linked. Antiparallel heterodimer with PDGFA; disulfide-linked. The PDGFB homodimer interacts with PDGFRA and PDGFRB homodimers, and with heterodimers formed by PDGFRA and PDGFRB. The heterodimer composed of PDGFA and PDGFB interacts with PDGFRB homodimers, and with heterodimers formed by PDGFRA and PDGFRB. Interacts with XLKD1. Interacts with LRP1. Interacts with SORL1 (via the N-terminal ectodomain). Interacts with CD82; this interaction inhibits PDGFB-mediated signaling pathway.

The protein localises to the secreted. Functionally, growth factor that plays an essential role in the regulation of embryonic development, cell proliferation, cell migration, survival and chemotaxis. Potent mitogen for cells of mesenchymal origin. Required for normal proliferation and recruitment of pericytes and vascular smooth muscle cells in the central nervous system, skin, lung, heart and placenta. Required for normal blood vessel development, and for normal development of kidney glomeruli. Plays an important role in wound healing. Signaling is modulated by the formation of heterodimers with PDGFA. The chain is Platelet-derived growth factor subunit B (PDGFB) from Canis lupus familiaris (Dog).